A 326-amino-acid chain; its full sequence is L-Ala--D-Glu endopeptidase (326 aa).

Positions 1-19 (MKVLLSALLLLLFAFEPSA) are cleaved as a signal peptide. Residues His204, Asp208, His292, and His294 each coordinate Zn(2+).

It belongs to the peptidase M23B family. Zn(2+) serves as cofactor.

L-Ala--D-Glu endopeptidase involved in production of single L-alanine side chains from tetrapeptides in the spore cortex peptidoglycan. Therefore, is required for the endospore cortex maturation. The protein is L-Ala--D-Glu endopeptidase (lytH) of Bacillus subtilis (strain 168).